The primary structure comprises 231 residues: Ribonuclease 3 (231 aa).

An RNase III domain is found at 7 to 135 (IQAIESKLNF…ILGAVYLDGG (129 aa)). Mg(2+) is bound at residue Glu-48. The active site involves Asp-52. Residues Asn-121 and Glu-124 each contribute to the Mg(2+) site. Glu-124 is an active-site residue. Residues 160 to 229 (NPKNRLQQFT…AKQALSTHDN (70 aa)) enclose the DRBM domain.

This sequence belongs to the ribonuclease III family. In terms of assembly, homodimer. The cofactor is Mg(2+).

The protein localises to the cytoplasm. The enzyme catalyses Endonucleolytic cleavage to 5'-phosphomonoester.. Digests double-stranded RNA. Involved in the processing of primary rRNA transcript to yield the immediate precursors to the large and small rRNAs (23S and 16S). Processes some mRNAs, and tRNAs when they are encoded in the rRNA operon. Processes pre-crRNA and tracrRNA of type II CRISPR loci if present in the organism. The polypeptide is Ribonuclease 3 (Chlamydia trachomatis serovar A (strain ATCC VR-571B / DSM 19440 / HAR-13)).